Here is a 346-residue protein sequence, read N- to C-terminus: Peripherin-2 (346 aa).

The Cytoplasmic segment spans residues 1 to 24 (MALLKVKFDQKKRVKLAQGLWLMN). A helical transmembrane segment spans residues 25–43 (WLSVLAGIVIFSLGLFLKI). Over 44 to 61 (ELRKRSDVMNNSESHFVP) the chain is Lumenal. Asn-53 carries N-linked (GlcNAc...) asparagine glycosylation. A helical membrane pass occupies residues 62-80 (NSLIVMGVLSCVFNSLAGK). The Cytoplasmic portion of the chain corresponds to 81-99 (ICYDALDPAKYAKWKPWLK). The helical transmembrane segment at 100-123 (PYLAVCVLFNIALFLVTLCCFLMR) threads the bilayer. Over 124–264 (GSLESTLAHG…LSYYSSLMNS (141 aa)) the chain is Lumenal. N-linked (GlcNAc...) asparagine glycosylation occurs at Asn-229. The helical transmembrane segment at 265-290 (MGAVTLLVWLFEVTITIGLRYLHTAL) threads the bilayer. Over 291 to 346 (EGVSNPEDPECESEGWLLEKSVSETWKAFLESLKKLGKSNQVEAEGADAGQAPEAG) the chain is Cytoplasmic. Positions 341–346 (QAPEAG) are interaction with MREG.

The protein belongs to the PRPH2/ROM1 family. As to quaternary structure, homodimer; disulfide-linked. Forms a homotetramer. Forms a heterotetramer with ROM1. Homotetramer and heterotetramer core complexes go on to form higher order complexes by formation of intermolecular disulfide bonds. Interacts with MREG. Interacts with STX3. Interacts with SNAP25. Retina (photoreceptor). In rim region of ROS (rod outer segment) disks.

The protein localises to the membrane. Its subcellular location is the cell projection. It is found in the cilium. The protein resides in the photoreceptor outer segment. It localises to the photoreceptor inner segment. In terms of biological role, essential for retina photoreceptor outer segment disk morphogenesis, may also play a role with ROM1 in the maintenance of outer segment disk structure. Required for the maintenance of retinal outer nuclear layer thickness. Required for the correct development and organization of the photoreceptor inner segment. The chain is Peripherin-2 (PRPH2) from Canis lupus familiaris (Dog).